The primary structure comprises 467 residues: Indoleacetamide hydrolase (467 aa).

Active-site charge relay system residues include K74 and S149. Catalysis depends on S173, which acts as the Acyl-ester intermediate.

The protein belongs to the amidase family.

The protein operates within plant hormone metabolism; auxin biosynthesis. Its function is as follows. Hydrolyzes indole-3-acetamide (IAM) into indole-3-acetic acid (IAA). This Rhizobium radiobacter (Agrobacterium tumefaciens) protein is Indoleacetamide hydrolase (tms2).